The primary structure comprises 424 residues: UDP-glycosyltransferase 76H1 (424 aa).

UDP-alpha-D-glucose contacts are provided by residues serine 248, 306–307 (WA), 324–332 (HCGWNSTIE), and 346–349 (FADQ).

The protein belongs to the UDP-glycosyltransferase family.

May glycosylate diterpenes or flavonols in leaves. This Stevia rebaudiana (Stevia) protein is UDP-glycosyltransferase 76H1.